The primary structure comprises 156 residues: Cytochrome c-type biogenesis protein CcmE 2 (156 aa).

Residues 1-8 (MNPQRRRR) lie on the Cytoplasmic side of the membrane. A helical; Signal-anchor for type II membrane protein transmembrane segment spans residues 9–29 (LWWVLALLLAGGLATTLVSMA). Over 30-156 (LQRNVAYLYT…AAANQGGALR (127 aa)) the chain is Periplasmic. 2 residues coordinate heme: histidine 123 and tyrosine 127. The disordered stretch occupies residues 135–156 (KMGSAHRKHDVPAAANQGGALR).

It belongs to the CcmE/CycJ family.

The protein localises to the cell inner membrane. Functionally, heme chaperone required for the biogenesis of c-type cytochromes. Transiently binds heme delivered by CcmC and transfers the heme to apo-cytochromes in a process facilitated by CcmF and CcmH. This chain is Cytochrome c-type biogenesis protein CcmE 2, found in Xanthomonas oryzae pv. oryzae (strain MAFF 311018).